The following is a 474-amino-acid chain: Bifunctional protein HldE (474 aa).

The tract at residues 1–318 is ribokinase; that stretch reads MKLSMPRFDQ…RAIQREEGSE (318 aa). 194-197 is an ATP binding site; the sequence is NLSE. Aspartate 263 is an active-site residue. The cytidylyltransferase stretch occupies residues 343–474; it reads FTNGCFDILH…AIVEKIRGQG (132 aa).

In the N-terminal section; belongs to the carbohydrate kinase PfkB family. This sequence in the C-terminal section; belongs to the cytidylyltransferase family. As to quaternary structure, homodimer.

The catalysed reaction is D-glycero-beta-D-manno-heptose 7-phosphate + ATP = D-glycero-beta-D-manno-heptose 1,7-bisphosphate + ADP + H(+). It carries out the reaction D-glycero-beta-D-manno-heptose 1-phosphate + ATP + H(+) = ADP-D-glycero-beta-D-manno-heptose + diphosphate. The protein operates within nucleotide-sugar biosynthesis; ADP-L-glycero-beta-D-manno-heptose biosynthesis; ADP-L-glycero-beta-D-manno-heptose from D-glycero-beta-D-manno-heptose 7-phosphate: step 1/4. It functions in the pathway nucleotide-sugar biosynthesis; ADP-L-glycero-beta-D-manno-heptose biosynthesis; ADP-L-glycero-beta-D-manno-heptose from D-glycero-beta-D-manno-heptose 7-phosphate: step 3/4. Its function is as follows. Catalyzes the phosphorylation of D-glycero-D-manno-heptose 7-phosphate at the C-1 position to selectively form D-glycero-beta-D-manno-heptose-1,7-bisphosphate. Catalyzes the ADP transfer from ATP to D-glycero-beta-D-manno-heptose 1-phosphate, yielding ADP-D-glycero-beta-D-manno-heptose. The polypeptide is Bifunctional protein HldE (Pseudomonas savastanoi pv. phaseolicola (strain 1448A / Race 6) (Pseudomonas syringae pv. phaseolicola (strain 1448A / Race 6))).